The following is a 208-amino-acid chain: Methionine-R-sulfoxide reductase B1 (208 aa).

A compositionally biased stretch (basic and acidic residues) spans 27–36 (QDSDNPDKRY). The interval 27 to 48 (QDSDNPDKRYSGPAATMDNKSE) is disordered. The 135-residue stretch at 54 to 188 (KEELRKRLTP…NSASIEFVNA (135 aa)) folds into the MsrB domain. Residues cysteine 93, cysteine 96, cysteine 154, and cysteine 157 each contribute to the Zn(2+) site. The cysteines at positions 111 and 177 are disulfide-linked. Cysteine 177 acts as the Nucleophile in catalysis. The tract at residues 189–208 (DPATSSPPVATPTAAPIAQQ) is disordered.

Belongs to the MsrB Met sulfoxide reductase family. Requires Zn(2+) as cofactor. As to expression, present in the embryonic nervous system (brain and cord) in neuronal cell bodies, along axons. Also present in embryonic muscles in motor axons. Localizes to growing bristle tips where it is distributed in small puntae. Present at and at sites of actin localization.

Its subcellular location is the cytoplasm. The protein localises to the nucleus. It localises to the cytoskeleton. It carries out the reaction L-methionyl-[protein] + [thioredoxin]-disulfide + H2O = L-methionyl-(R)-S-oxide-[protein] + [thioredoxin]-dithiol. Its function is as follows. Methionine-sulfoxide reductase that specifically reduces methionine (R)-sulfoxide back to methionine. While in many cases methionine oxidation is the result of random oxidation following oxidative stress, methionine oxidation is also a post-translational modification that takes place on specific residues. Acts as a regulator of actin assembly by reducing methionine (R)-sulfoxide mediated by Mical on actin thereby promoting filament repolymerization. This Drosophila melanogaster (Fruit fly) protein is Methionine-R-sulfoxide reductase B1 (SelR).